Reading from the N-terminus, the 121-residue chain is Phosphoribosyl-ATP pyrophosphatase (121 aa).

This sequence belongs to the PRA-PH family.

The protein resides in the cytoplasm. The catalysed reaction is 1-(5-phospho-beta-D-ribosyl)-ATP + H2O = 1-(5-phospho-beta-D-ribosyl)-5'-AMP + diphosphate + H(+). Its pathway is amino-acid biosynthesis; L-histidine biosynthesis; L-histidine from 5-phospho-alpha-D-ribose 1-diphosphate: step 2/9. This chain is Phosphoribosyl-ATP pyrophosphatase, found in Burkholderia cenocepacia (strain HI2424).